A 291-amino-acid polypeptide reads, in one-letter code: Nucleotide-binding protein CMM_1747 (291 aa).

15 to 22 provides a ligand contact to ATP; the sequence is GMSGAGRS. Residue 66-69 coordinates GTP; it reads DVRG.

This sequence belongs to the RapZ-like family.

Its function is as follows. Displays ATPase and GTPase activities. This chain is Nucleotide-binding protein CMM_1747, found in Clavibacter michiganensis subsp. michiganensis (strain NCPPB 382).